The primary structure comprises 174 residues: Transcriptional repressor NrdR (174 aa).

A zinc finger spans residues 3 to 34 (CPFCQHNDTRVIDSRVSEDGTTIRRRRECEAC). Residues 49-139 (PTVVKSDGGR…VYRSFQDVAD (91 aa)) form the ATP-cone domain.

It belongs to the NrdR family. The cofactor is Zn(2+).

Negatively regulates transcription of bacterial ribonucleotide reductase nrd genes and operons by binding to NrdR-boxes. The chain is Transcriptional repressor NrdR from Xanthomonas axonopodis pv. citri (strain 306).